The primary structure comprises 119 residues: NADH-quinone oxidoreductase subunit A (119 aa).

3 consecutive transmembrane segments (helical) span residues 7 to 27 (FPVL…MTIG), 63 to 83 (LIAI…PWGV), and 88 to 108 (IGWP…VGFV).

This sequence belongs to the complex I subunit 3 family. In terms of assembly, NDH-1 is composed of 14 different subunits. Subunits NuoA, H, J, K, L, M, N constitute the membrane sector of the complex.

The protein localises to the cell inner membrane. The enzyme catalyses a quinone + NADH + 5 H(+)(in) = a quinol + NAD(+) + 4 H(+)(out). Functionally, NDH-1 shuttles electrons from NADH, via FMN and iron-sulfur (Fe-S) centers, to quinones in the respiratory chain. The immediate electron acceptor for the enzyme in this species is believed to be ubiquinone. Couples the redox reaction to proton translocation (for every two electrons transferred, four hydrogen ions are translocated across the cytoplasmic membrane), and thus conserves the redox energy in a proton gradient. This Ralstonia pickettii (strain 12J) protein is NADH-quinone oxidoreductase subunit A.